Here is a 269-residue protein sequence, read N- to C-terminus: AA9 family lytic polysaccharide monooxygenase I (269 aa).

A signal peptide spans 1-17 (MFSKKITALALVSAVKA). His18 and His103 together coordinate Cu(2+). Residues Cys73 and Cys196 are joined by a disulfide bond. Asn156 carries an N-linked (GlcNAc...) asparagine glycan. O2-binding residues include His182 and Gln191. Residue Tyr193 coordinates Cu(2+).

Belongs to the polysaccharide monooxygenase AA9 family. Cu(2+) is required as a cofactor.

It localises to the secreted. The catalysed reaction is [(1-&gt;4)-beta-D-glucosyl]n+m + reduced acceptor + O2 = 4-dehydro-beta-D-glucosyl-[(1-&gt;4)-beta-D-glucosyl]n-1 + [(1-&gt;4)-beta-D-glucosyl]m + acceptor + H2O.. Lytic polysaccharide monooxygenase (LPMO) that depolymerizes crystalline and amorphous polysaccharides via the oxidation of scissile alpha- or beta-(1-4)-glycosidic bonds, yielding C1 and C4 oxidation products. Catalysis by LPMOs requires the reduction of the active-site copper from Cu(II) to Cu(I) by a reducing agent and H(2)O(2) or O(2) as a cosubstrate. In Botryotinia fuckeliana (strain B05.10) (Noble rot fungus), this protein is AA9 family lytic polysaccharide monooxygenase I.